The primary structure comprises 149 residues: D-aminoacyl-tRNA deacylase (149 aa).

The Gly-cisPro motif, important for rejection of L-amino acids motif lies at 137–138 (GP).

The protein belongs to the DTD family. Homodimer.

It is found in the cytoplasm. It carries out the reaction glycyl-tRNA(Ala) + H2O = tRNA(Ala) + glycine + H(+). The catalysed reaction is a D-aminoacyl-tRNA + H2O = a tRNA + a D-alpha-amino acid + H(+). In terms of biological role, an aminoacyl-tRNA editing enzyme that deacylates mischarged D-aminoacyl-tRNAs. Also deacylates mischarged glycyl-tRNA(Ala), protecting cells against glycine mischarging by AlaRS. Acts via tRNA-based rather than protein-based catalysis; rejects L-amino acids rather than detecting D-amino acids in the active site. By recycling D-aminoacyl-tRNA to D-amino acids and free tRNA molecules, this enzyme counteracts the toxicity associated with the formation of D-aminoacyl-tRNA entities in vivo and helps enforce protein L-homochirality. This Desulfotalea psychrophila (strain LSv54 / DSM 12343) protein is D-aminoacyl-tRNA deacylase.